A 556-amino-acid chain; its full sequence is 2-succinyl-5-enolpyruvyl-6-hydroxy-3-cyclohexene-1-carboxylate synthase (556 aa).

It belongs to the TPP enzyme family. MenD subfamily. As to quaternary structure, homodimer. Requires Mg(2+) as cofactor. It depends on Mn(2+) as a cofactor. The cofactor is thiamine diphosphate.

It carries out the reaction isochorismate + 2-oxoglutarate + H(+) = 5-enolpyruvoyl-6-hydroxy-2-succinyl-cyclohex-3-ene-1-carboxylate + CO2. The protein operates within quinol/quinone metabolism; 1,4-dihydroxy-2-naphthoate biosynthesis; 1,4-dihydroxy-2-naphthoate from chorismate: step 2/7. It functions in the pathway quinol/quinone metabolism; menaquinone biosynthesis. Functionally, catalyzes the thiamine diphosphate-dependent decarboxylation of 2-oxoglutarate and the subsequent addition of the resulting succinic semialdehyde-thiamine pyrophosphate anion to isochorismate to yield 2-succinyl-5-enolpyruvyl-6-hydroxy-3-cyclohexene-1-carboxylate (SEPHCHC). This Salmonella typhimurium (strain LT2 / SGSC1412 / ATCC 700720) protein is 2-succinyl-5-enolpyruvyl-6-hydroxy-3-cyclohexene-1-carboxylate synthase.